We begin with the raw amino-acid sequence, 365 residues long: 3-galactosyl-N-acetylglucosaminide 4-alpha-L-fucosyltransferase FUT3 (365 aa).

Residues methionine 1–histidine 15 lie on the Cytoplasmic side of the membrane. Residues cysteine 16–leucine 34 traverse the membrane as a helical; Signal-anchor for type II membrane protein segment. The Lumenal segment spans residues arginine 35–glutamine 365. Residues asparagine 100, asparagine 158, and asparagine 189 are each glycosylated (N-linked (GlcNAc...) asparagine).

The protein belongs to the glycosyltransferase 10 family. Post-translationally, glycosylated. As to expression, liver, kidney, lung and brain.

It localises to the golgi apparatus. The protein localises to the golgi stack membrane. The enzyme catalyses a beta-D-galactosyl-(1-&gt;3)-N-acetyl-beta-D-glucosaminyl derivative + GDP-beta-L-fucose = a beta-D-galactosyl-(1-&gt;3)-[alpha-L-fucosyl-(1-&gt;4)]-N-acetyl-beta-D-glucosaminyl derivative + GDP + H(+). It carries out the reaction an N-acetyl-alpha-neuraminyl-(2-&gt;3)-beta-D-galactosyl-(1-&gt;4)-N-acetyl-beta-D-glucosaminyl derivative + GDP-beta-L-fucose = an alpha-Neu5Ac-(2-&gt;3)-beta-D-Gal-(1-&gt;4)-[alpha-L-Fuc-(1-&gt;3)]-beta-D-GlcNAc derivative + GDP + H(+). The catalysed reaction is a beta-D-galactosyl-(1-&gt;4)-N-acetyl-beta-D-glucosaminyl derivative + GDP-beta-L-fucose = a beta-D-galactosyl-(1-&gt;4)-[alpha-L-fucosyl-(1-&gt;3)]-N-acetyl-beta-D-glucosaminyl derivative + GDP + H(+). It catalyses the reaction an alpha-Neu5Ac-(2-&gt;3)-beta-D-Gal-(1-&gt;4)-beta-D-GlcNAc-(1-&gt;3)-beta-D-Gal-(1-&gt;4)-[alpha-L-Fuc-(1-&gt;3)]-beta-D-GlcNAc derivative + GDP-beta-L-fucose = an alpha-Neu5Ac-(2-&gt;3)-beta-D-Gal-(1-&gt;4)-[alpha-L-Fuc-(1-&gt;3)]-beta-D-GlcNAc-(1-&gt;3)-beta-D-Gal-(1-&gt;4)-[alpha-L-Fuc-(1-&gt;3)]-beta-D-GlcNAc derivative + GDP + H(+). The enzyme catalyses Lc4Cer + GDP-beta-L-fucose = a lactoside III(4)-a-Fuc-Lc4Cer + GDP + H(+). It carries out the reaction a beta-D-Gal-(1-&gt;3)-beta-D-GlcNAc-(1-&gt;3)-beta-D-Gal-(1-&gt;4)-beta-D-Glc-(1&lt;-&gt;1')-Cer(d18:1(4E)) + GDP-beta-L-fucose = a III(4)-a-Fuc-Lc4Cer(d18:1(4E)) + GDP + H(+). The catalysed reaction is N-acetyl-alpha-neuraminosyl-(2-&gt;3)-beta-D-galactosyl-(1-&gt;3)-[N-acetyl-alpha-neuraminosyl-(2-&gt;6)]-N-acetyl-beta-D-glucosaminyl-(1-&gt;3)-beta-D-galactosyl-(1-&gt;4)-beta-D-glucosyl-(1&lt;-&gt;1')-N-acyl-sphing-4-enine + GDP-beta-L-fucose = N-acetyl-alpha-neuraminosyl-(2-&gt;3)-beta-D-galactosyl-(1-&gt;3)-alpha-L-fucosyl-(1-&gt;4)-[N-acetyl-alpha-neuraminosyl-(2-&gt;6)-N-acetyl-beta-D-glucosaminyl-(1-&gt;3)]-beta-D-galactosyl-(1-&gt;4)-beta-D-glucosyl-(1&lt;-&gt;1')-N-acyl-sphing-4-enine + GDP + H(+). It catalyses the reaction N-acetyl-alpha-neuraminosyl-(2-&gt;3)-beta-D-galactosyl-(1-&gt;3)-N-acetyl-beta-D-glucosaminyl-(1-&gt;3)-beta-D-galactosyl-(1-&gt;4)-beta-D-glucosyl-(1&lt;-&gt;1')-N-acyl-sphing-4-enine + GDP-beta-L-fucose = N-acetyl-alpha-neuraminosyl-(2-&gt;3)-beta-D-galactosyl-(1-&gt;3)-alpha-L-fucosyl-(1-&gt;4)-[N-acetyl-beta-D-glucosaminyl-(1-&gt;3)]-beta-D-galactosyl-(1-&gt;4)-beta-D-glucosyl-(1&lt;-&gt;1')-N-acyl-sphing-4-enine + GDP + H(+). The enzyme catalyses beta-D-galactosyl-(1-&gt;3)-N-acetyl-D-glucosamine + GDP-beta-L-fucose = beta-D-galactosyl-(1-&gt;3)-[alpha-L-fucosyl-(1-&gt;4)]-N-acetyl-D-glucosamine + GDP + H(+). It carries out the reaction alpha-L-Fuc-(1-&gt;2)-beta-D-Gal-(1-&gt;3)-D-GlcNAc + GDP-beta-L-fucose = alpha-L-Fuc-(1-&gt;2)-beta-D-Gal-(1-&gt;3)-[alpha-L-Fuc-(1-&gt;4)]-D-GlcNAc + GDP + H(+). The catalysed reaction is alpha-L-Fuc-(1-&gt;2)-beta-D-Gal-(1-&gt;4)-D-GlcNAc + GDP-beta-L-fucose = alpha-L-Fuc-(1-&gt;2)-beta-D-Gal-(1-&gt;4)-[alpha-L-Fuc-(1-&gt;3)]-D-GlcNAc + GDP + H(+). It catalyses the reaction beta-D-galactosyl-(1-&gt;4)-N-acetyl-D-glucosamine + GDP-beta-L-fucose = beta-D-galactosyl-(1-&gt;4)-[alpha-L-fucosyl-(1-&gt;3)]-N-acetyl-D-glucosamine + GDP + H(+). The enzyme catalyses lactose + GDP-beta-L-fucose = beta-D-galactosyl-(1-&gt;4)-[alpha-L-fucosyl-(1-&gt;3)]-D-glucose + GDP + H(+). It carries out the reaction an alpha-Neu5Ac-(2-&gt;3)-beta-D-Gal-(1-&gt;3)-D-GlcNAc derivative + GDP-beta-L-fucose = an alpha-Neu5Ac-(2-&gt;3)-beta-D-Gal-(1-&gt;3)-[alpha-L-Fuc-(1-&gt;4)]-beta-D-GlcNAc derivative + GDP + H(+). Its pathway is protein modification; protein glycosylation. Functionally, catalyzes the transfer of L-fucose, from a guanosine diphosphate-beta-L-fucose, to both the subterminal N-acetyl glucosamine (GlcNAc) of type 1 chain (beta-D-Gal-(1-&gt;3)-beta-D-GlcNAc) glycolipids and oligosaccharides via an alpha(1,4) linkage, and the subterminal glucose (Glc) or GlcNAc of type 2 chain (beta-D-Gal-(1-&gt;4)-beta-D-GlcNAc) oligosaccharides via an alpha(1,3) linkage, independently of the presence of terminal alpha-L-fucosyl-(1,2) moieties on the terminal galactose of these acceptors and participates in the blood groups Lewis determination and expression of Lewis a (Le(a)), lewis b (Le(b)), Lewis x/SSEA-1 (Le(x)) and lewis y (Le(y)) antigens. Also catalyzes the transfer of L-fucose to subterminal GlcNAc of sialyl- and disialyl-lactotetraosylceramide to produce sialyl Lewis a (sLe(a)) and disialyl Lewis a via an alpha(1,4) linkage and therefore may regulate cell surface sialyl Lewis a expression and consequently regulates adhesive properties to E-selectin, cell proliferation and migration. Catalyzes the transfer of an L-fucose to 3'-sialyl-N-acetyllactosamine by an alpha(1,3) linkage, which allows the formation of sialyl-Lewis x structure and therefore may regulate the sialyl-Lewis x surface antigen expression and consequently adhesive properties to E-selectin. Prefers type 1 chain over type 2 acceptors. Type 1 tetrasaccharide is a better acceptor than type 1 disaccharide suggesting that a beta anomeric configuration of GlcNAc in the substrate is preferred. Lewis-positive (Le(+)) individuals have an active enzyme while Lewis-negative (Le(-)) individuals have an inactive enzyme. This chain is 3-galactosyl-N-acetylglucosaminide 4-alpha-L-fucosyltransferase FUT3, found in Bos taurus (Bovine).